Reading from the N-terminus, the 431-residue chain is Glutamyl-tRNA(Gln) amidotransferase subunit A (431 aa).

Active-site charge relay system residues include lysine 55 and serine 130. Serine 154 (acyl-ester intermediate) is an active-site residue.

This sequence belongs to the amidase family. GatA subfamily. Heterotrimer of A, B and C subunits.

The catalysed reaction is L-glutamyl-tRNA(Gln) + L-glutamine + ATP + H2O = L-glutaminyl-tRNA(Gln) + L-glutamate + ADP + phosphate + H(+). Functionally, allows the formation of correctly charged Gln-tRNA(Gln) through the transamidation of misacylated Glu-tRNA(Gln) in organisms which lack glutaminyl-tRNA synthetase. The reaction takes place in the presence of glutamine and ATP through an activated gamma-phospho-Glu-tRNA(Gln). This is Glutamyl-tRNA(Gln) amidotransferase subunit A from Methanococcus maripaludis (strain C5 / ATCC BAA-1333).